Consider the following 229-residue polypeptide: Peroxiredoxin-like 2A (229 aa).

The interval 14–112 (MWSIGAGALG…DQLGVPLYAV (99 aa)) is thioredoxin fold. Catalysis depends on redox-active residues C85 and C88.

This sequence belongs to the peroxiredoxin-like PRXL2 family. PRXL2A subfamily. Expressed in CSF1 and TNFSF11-stimulated CD14(+) peripheral blood mononuclear cells (PBMCs).

Its subcellular location is the cytoplasm. The protein resides in the secreted. Functionally, involved in redox regulation of the cell. Acts as an antioxidant. Inhibits TNFSF11-induced NFKB1 and JUN activation and osteoclast differentiation. May affect bone resorption and help to maintain bone mass. Acts as a negative regulator of macrophage-mediated inflammation by inhibiting macrophage production of inflammatory cytokines, probably through suppression of the MAPK signaling pathway. This chain is Peroxiredoxin-like 2A, found in Homo sapiens (Human).